The following is a 183-amino-acid chain: Ribose 1,5-bisphosphate phosphokinase PhnN (183 aa).

It belongs to the ribose 1,5-bisphosphokinase family.

It carries out the reaction alpha-D-ribose 1,5-bisphosphate + ATP = 5-phospho-alpha-D-ribose 1-diphosphate + ADP. It participates in metabolic intermediate biosynthesis; 5-phospho-alpha-D-ribose 1-diphosphate biosynthesis; 5-phospho-alpha-D-ribose 1-diphosphate from D-ribose 5-phosphate (route II): step 3/3. In terms of biological role, catalyzes the phosphorylation of ribose 1,5-bisphosphate to 5-phospho-D-ribosyl alpha-1-diphosphate (PRPP). The polypeptide is Ribose 1,5-bisphosphate phosphokinase PhnN (Azotobacter vinelandii (strain DJ / ATCC BAA-1303)).